Reading from the N-terminus, the 155-residue chain is Cyclic pyranopterin monophosphate synthase (155 aa).

Substrate is bound by residues 75 to 77 (LCH) and 111 to 112 (ME). Residue D126 is part of the active site.

This sequence belongs to the MoaC family. In terms of assembly, homohexamer; trimer of dimers.

It carries out the reaction (8S)-3',8-cyclo-7,8-dihydroguanosine 5'-triphosphate = cyclic pyranopterin phosphate + diphosphate. It functions in the pathway cofactor biosynthesis; molybdopterin biosynthesis. Catalyzes the conversion of (8S)-3',8-cyclo-7,8-dihydroguanosine 5'-triphosphate to cyclic pyranopterin monophosphate (cPMP). In Corynebacterium efficiens (strain DSM 44549 / YS-314 / AJ 12310 / JCM 11189 / NBRC 100395), this protein is Cyclic pyranopterin monophosphate synthase.